Consider the following 287-residue polypeptide: tRNA-cytidine(32) 2-sulfurtransferase (287 aa).

The PP-loop motif motif lies at 39 to 44; sequence SGGKDS. 3 residues coordinate [4Fe-4S] cluster: C114, C117, and C205.

The protein belongs to the TtcA family. As to quaternary structure, homodimer. The cofactor is Mg(2+). Requires [4Fe-4S] cluster as cofactor.

It localises to the cytoplasm. It carries out the reaction cytidine(32) in tRNA + S-sulfanyl-L-cysteinyl-[cysteine desulfurase] + AH2 + ATP = 2-thiocytidine(32) in tRNA + L-cysteinyl-[cysteine desulfurase] + A + AMP + diphosphate + H(+). The protein operates within tRNA modification. In terms of biological role, catalyzes the ATP-dependent 2-thiolation of cytidine in position 32 of tRNA, to form 2-thiocytidine (s(2)C32). The sulfur atoms are provided by the cysteine/cysteine desulfurase (IscS) system. In Dechloromonas aromatica (strain RCB), this protein is tRNA-cytidine(32) 2-sulfurtransferase.